The chain runs to 65 residues: MNSAHPCCDPVTCKPKRGEHCISGPCCRNCKFLSPGTICKKARGDDMNDYCTGISSDCPRNRYKS.

Residues 1–65 (MNSAHPCCDP…SDCPRNRYKS (65 aa)) form the Disintegrin domain. 4 cysteine pairs are disulfide-bonded: Cys-7–Cys-30, Cys-21–Cys-27, Cys-26–Cys-51, and Cys-39–Cys-58. Residues 43–45 (RGD) carry the Cell attachment site motif.

The protein belongs to the disintegrin family. Dimeric disintegrin subfamily. Homodimer; disulfide-linked. In terms of tissue distribution, expressed by the venom gland.

The protein localises to the secreted. Functionally, binds and inhibits integrins alpha-IIb/beta-3 (ITGA2B/ITGB3), alpha-V/beta-3 (ITGAV/ITGB3) and alpha-5/beta-1 (ITGA5/ITGB1). This Cerastes cerastes (Horned desert viper) protein is Disintegrin CC5.